We begin with the raw amino-acid sequence, 64 residues long: MSGREGGKKKPLKAPKKQSKEMDEDEMAFKQKQKEDQKAMEQLKAKAAGKGPLTGGGIKKSGKK.

Positions 1-64 (MSGREGGKKK…GGGIKKSGKK (64 aa)) are disordered. Positions 21–50 (EMDEDEMAFKQKQKEDQKAMEQLKAKAAGK) form a coiled coil. Residues 27–44 (MAFKQKQKEDQKAMEQLK) show a composition bias toward basic and acidic residues. Residues 52–64 (PLTGGGIKKSGKK) show a composition bias toward gly residues.

This sequence belongs to the TMA7 family.

The chain is Translation machinery-associated protein 7 (tma7) from Danio rerio (Zebrafish).